The primary structure comprises 102 residues: Small ribosomal subunit protein bS18 (102 aa).

The protein belongs to the bacterial ribosomal protein bS18 family. As to quaternary structure, part of the 30S ribosomal subunit. Forms a tight heterodimer with protein bS6.

Functionally, binds as a heterodimer with protein bS6 to the central domain of the 16S rRNA, where it helps stabilize the platform of the 30S subunit. This Orientia tsutsugamushi (strain Ikeda) (Rickettsia tsutsugamushi) protein is Small ribosomal subunit protein bS18.